The primary structure comprises 357 residues: Protein-glutamate methylesterase/protein-glutamine glutaminase (357 aa).

One can recognise a Response regulatory domain in the interval 3–120 (RVIVVDDSAF…LASMDLAALS (118 aa)). Residue Asp-54 is modified to 4-aspartylphosphate. Residues 165–357 (ERSRRDIIAI…AERVASALYK (193 aa)) enclose the CheB-type methylesterase domain. Catalysis depends on residues Ser-177, His-204, and Asp-300.

This sequence belongs to the CheB family. Post-translationally, phosphorylated by CheA. Phosphorylation of the N-terminal regulatory domain activates the methylesterase activity.

It is found in the cytoplasm. It catalyses the reaction [protein]-L-glutamate 5-O-methyl ester + H2O = L-glutamyl-[protein] + methanol + H(+). The enzyme catalyses L-glutaminyl-[protein] + H2O = L-glutamyl-[protein] + NH4(+). In terms of biological role, involved in chemotaxis. Part of a chemotaxis signal transduction system that modulates chemotaxis in response to various stimuli. Catalyzes the demethylation of specific methylglutamate residues introduced into the chemoreceptors (methyl-accepting chemotaxis proteins or MCP) by CheR. Also mediates the irreversible deamidation of specific glutamine residues to glutamic acid. This chain is Protein-glutamate methylesterase/protein-glutamine glutaminase, found in Lawsonia intracellularis (strain PHE/MN1-00).